We begin with the raw amino-acid sequence, 284 residues long: 16S rRNA (guanine(1405)-N(7))-methyltransferase (284 aa).

S-adenosyl-L-methionine contacts are provided by residues tyrosine 73, 111–113, arginine 117, alanine 142, aspartate 165, 191–192, leucine 208, and glutamine 217; these read HAS and DL.

This sequence belongs to the methyltransferase superfamily. Aminoglycoside resistance family.

It carries out the reaction guanosine(1405) in 16S rRNA + S-adenosyl-L-methionine = N(7)-methylguanosine(1405) in 16S rRNA + S-adenosyl-L-homocysteine. Specifically methylates the N(7) position of guanine 1405 in 16S rRNA. Confers resistance to various aminoglycosides, including gentamicin and kanamycin. The protein is 16S rRNA (guanine(1405)-N(7))-methyltransferase (Krm) of Frankia casuarinae (strain DSM 45818 / CECT 9043 / HFP020203 / CcI3).